The sequence spans 264 residues: Thymidylate synthase (264 aa).

Arg21 lines the dUMP pocket. His51 lines the (6R)-5,10-methylene-5,6,7,8-tetrahydrofolate pocket. 126 to 127 (RR) lines the dUMP pocket. The Nucleophile role is filled by Cys146. Residues 166 to 169 (RSAD), Asn177, and 207 to 209 (HLY) each bind dUMP. Asp169 lines the (6R)-5,10-methylene-5,6,7,8-tetrahydrofolate pocket. Ser263 contacts (6R)-5,10-methylene-5,6,7,8-tetrahydrofolate.

Belongs to the thymidylate synthase family. Bacterial-type ThyA subfamily. Homodimer.

It localises to the cytoplasm. It catalyses the reaction dUMP + (6R)-5,10-methylene-5,6,7,8-tetrahydrofolate = 7,8-dihydrofolate + dTMP. The protein operates within pyrimidine metabolism; dTTP biosynthesis. Catalyzes the reductive methylation of 2'-deoxyuridine-5'-monophosphate (dUMP) to 2'-deoxythymidine-5'-monophosphate (dTMP) while utilizing 5,10-methylenetetrahydrofolate (mTHF) as the methyl donor and reductant in the reaction, yielding dihydrofolate (DHF) as a by-product. This enzymatic reaction provides an intracellular de novo source of dTMP, an essential precursor for DNA biosynthesis. This chain is Thymidylate synthase, found in Nitrosococcus oceani (strain ATCC 19707 / BCRC 17464 / JCM 30415 / NCIMB 11848 / C-107).